The primary structure comprises 410 residues: MFKFYTMDDFDYSGSRVLVRVDINSPVDPHTGRILDDTRMRLHSKTLKELVDENAKVAILAHQSRPGKRDFTTMEEHSKVLSNILDMPVTYVEDIFGCAARESIRNMENGDIILLENVRFYSEEVLKRDPKVQAETHLVRKLSSVVDYYINDAFAAAHRSQPSLVGFPLKLPSAAGRLMEREVKTLYKIIKNVEKPCVYILGGVKIDDSIMIMKNILKNGSADYILTSGLVANVFLEASGIDIKEKNRKILYRKNYKKFIKMAKKLKDKYGEKILTPVDVAINKNGKRIDVPIDDIPNFPIYDIGMETIKIYAEKIREAKTIFANGPAGVFEEQQFSIGTEDLLNAIASSNAFSVIAGGHLAAAAEKMGISNKINHISSGGGACIAFLSGEELPAIKVLEEARKRSDKYI.

Substrate contacts are provided by residues 22 to 24 (DIN), arginine 39, 62 to 65 (HQSR), arginine 119, and arginine 159. Residues glutamate 332 and 358–361 (GGHL) contribute to the ATP site.

It belongs to the phosphoglycerate kinase family. In terms of assembly, homodimer.

It is found in the cytoplasm. The catalysed reaction is (2R)-3-phosphoglycerate + ATP = (2R)-3-phospho-glyceroyl phosphate + ADP. The protein operates within carbohydrate degradation; glycolysis; pyruvate from D-glyceraldehyde 3-phosphate: step 2/5. This is Phosphoglycerate kinase (pgk) from Methanothermus fervidus (strain ATCC 43054 / DSM 2088 / JCM 10308 / V24 S).